A 305-amino-acid polypeptide reads, in one-letter code: Probable lipid kinase YegS-like (305 aa).

The DAGKc domain maps to 1 to 129 (MSERKALLIL…IDLGEVGGQI (129 aa)). Residues threonine 39, 65–71 (GDGTLRD), and threonine 92 each bind ATP. Mg(2+)-binding residues include leucine 210, aspartate 213, and leucine 215. The active-site Proton acceptor is glutamate 268.

Belongs to the diacylglycerol/lipid kinase family. YegS lipid kinase subfamily. Mg(2+) serves as cofactor. It depends on Ca(2+) as a cofactor.

It localises to the cytoplasm. Functionally, probably phosphorylates lipids; the in vivo substrate is unknown. This chain is Probable lipid kinase YegS-like, found in Pseudomonas fluorescens (strain Pf0-1).